The sequence spans 324 residues: Coproporphyrin III ferrochelatase (324 aa).

Residues H184 and E266 each contribute to the Fe(2+) site.

It belongs to the ferrochelatase family.

The protein localises to the cytoplasm. It catalyses the reaction Fe-coproporphyrin III + 2 H(+) = coproporphyrin III + Fe(2+). It participates in porphyrin-containing compound metabolism; protoheme biosynthesis. Involved in coproporphyrin-dependent heme b biosynthesis. Catalyzes the insertion of ferrous iron into coproporphyrin III to form Fe-coproporphyrin III. The polypeptide is Coproporphyrin III ferrochelatase (Lactiplantibacillus plantarum (strain ATCC BAA-793 / NCIMB 8826 / WCFS1) (Lactobacillus plantarum)).